A 454-amino-acid polypeptide reads, in one-letter code: MDSKQTKTMNNIVDQVNCLSISSPSKDLEMLNLIEENVTEDPMKHGIRKSHTMEVNGKTLELFCSDNPPQTPLEHQVRGVVFYGSEMILQGFPYSNEQIITEKSTEEEISFLYENNDWTITEAIEGTLIRIFYFNDKWIITTHRKLDAFKSKWGSEKSFGDIFKEAVMIKTKDPQINNDIDVNTLCEKLGLNKHRQYTFLITATDKTRFVCPSTPIPIVYLYAITEKINNKTTIISENDSEMKKWNDWKQESLHLKAPEAIQFVQNLSFPFRCQGLLFFNSKTFESYKLVNKTYQEYFDVRGNIPSVPFAYLHILGNKNKIQMFKQMISEKDIETIEKYEKTIQELIVELHNLYLKRYVEKDTEMKTDKTKHKFLLELHEWFKNQREKCVSTGAIPKIRVTQNVVSKILLESDPPVINRLIKEKIHPSSPTASLSSLSPPSSNNNSPIRSPIRM.

Residues 330–357 (EKDIETIEKYEKTIQELIVELHNLYLKR) adopt a coiled-coil conformation. The tract at residues 428–454 (SSPTASLSSLSPPSSNNNSPIRSPIRM) is disordered.

Belongs to the IIV-6 393L family.

This chain is Immediate-early protein ICP-46 homolog, found in Invertebrate iridescent virus 6 (IIV-6).